We begin with the raw amino-acid sequence, 320 residues long: tRNA(Ile)-lysidine synthase, chloroplastic (320 aa).

31 to 36 provides a ligand contact to ATP; the sequence is SGGKDS.

It belongs to the tRNA(Ile)-lysidine synthase family.

The protein localises to the plastid. It localises to the chloroplast. The enzyme catalyses cytidine(34) in tRNA(Ile2) + L-lysine + ATP = lysidine(34) in tRNA(Ile2) + AMP + diphosphate + H(+). Functionally, ligates lysine onto the cytidine present at position 34 of the AUA codon-specific tRNA(Ile) that contains the anticodon CAU, in an ATP-dependent manner. Cytidine is converted to lysidine, thus changing the amino acid specificity of the tRNA from methionine to isoleucine. The chain is tRNA(Ile)-lysidine synthase, chloroplastic from Gracilaria tenuistipitata var. liui (Red alga).